The following is a 124-amino-acid chain: Large ribosomal subunit protein bL12 (124 aa).

This sequence belongs to the bacterial ribosomal protein bL12 family. As to quaternary structure, homodimer. Part of the ribosomal stalk of the 50S ribosomal subunit. Forms a multimeric L10(L12)X complex, where L10 forms an elongated spine to which 2 to 4 L12 dimers bind in a sequential fashion. Binds GTP-bound translation factors.

In terms of biological role, forms part of the ribosomal stalk which helps the ribosome interact with GTP-bound translation factors. Is thus essential for accurate translation. The sequence is that of Large ribosomal subunit protein bL12 from Burkholderia cenocepacia (strain ATCC BAA-245 / DSM 16553 / LMG 16656 / NCTC 13227 / J2315 / CF5610) (Burkholderia cepacia (strain J2315)).